Reading from the N-terminus, the 194-residue chain is UPF0301 protein FTH_1193 (194 aa).

This sequence belongs to the UPF0301 (AlgH) family.

The chain is UPF0301 protein FTH_1193 from Francisella tularensis subsp. holarctica (strain OSU18).